The sequence spans 307 residues: Transcription factor MYB78 (307 aa).

2 HTH myb-type domains span residues 23–79 (EMDV…RPDV) and 80–130 (RRGN…QKHA). 2 DNA-binding regions (H-T-H motif) span residues 51-75 (WNSL…LNYL) and 103-126 (WSKI…RTRV).

It localises to the nucleus. This chain is Transcription factor MYB78, found in Arabidopsis thaliana (Mouse-ear cress).